The sequence spans 409 residues: S-adenosylmethionine synthase (409 aa).

141-146 (GQGSAD) contributes to the ATP binding site.

It belongs to the AdoMet synthase 2 family. Mg(2+) serves as cofactor.

The catalysed reaction is L-methionine + ATP + H2O = S-adenosyl-L-methionine + phosphate + diphosphate. It functions in the pathway amino-acid biosynthesis; S-adenosyl-L-methionine biosynthesis; S-adenosyl-L-methionine from L-methionine: step 1/1. Catalyzes the formation of S-adenosylmethionine from methionine and ATP. This Hyperthermus butylicus (strain DSM 5456 / JCM 9403 / PLM1-5) protein is S-adenosylmethionine synthase.